The primary structure comprises 224 residues: Ribosomal RNA small subunit methyltransferase G (224 aa).

S-adenosyl-L-methionine is bound by residues Gly89, Leu94, 140-141, and Arg154; that span reads IE.

It belongs to the methyltransferase superfamily. RNA methyltransferase RsmG family.

The protein localises to the cytoplasm. The enzyme catalyses guanosine(527) in 16S rRNA + S-adenosyl-L-methionine = N(7)-methylguanosine(527) in 16S rRNA + S-adenosyl-L-homocysteine. Functionally, specifically methylates the N7 position of guanine in position 527 of 16S rRNA. In Bordetella avium (strain 197N), this protein is Ribosomal RNA small subunit methyltransferase G.